A 770-amino-acid polypeptide reads, in one-letter code: Molybdenum cofactor sulfurase (770 aa).

Lys243 bears the N6-(pyridoxal phosphate)lysine mark. Cys405 is a catalytic residue. The 159-residue stretch at 611–769 folds into the MOSC domain; it reads GDEVANWLCQ…LACGDPITVL (159 aa). Phosphoserine is present on Ser726.

This sequence belongs to the class-V pyridoxal-phosphate-dependent aminotransferase family. MOCOS subfamily. It depends on pyridoxal 5'-phosphate as a cofactor.

It catalyses the reaction Mo-molybdopterin + L-cysteine + AH2 = thio-Mo-molybdopterin + L-alanine + A + H2O. It functions in the pathway cofactor biosynthesis; molybdopterin biosynthesis. In terms of biological role, sulfurates the molybdenum cofactor. Sulfation of molybdenum is essential for xanthine dehydrogenase (XDH) and aldehyde oxidase (ADO) enzymes in which molybdenum cofactor is liganded by 1 oxygen and 1 sulfur atom in active form. The chain is Molybdenum cofactor sulfurase from Drosophila grimshawi (Hawaiian fruit fly).